Consider the following 319-residue polypeptide: MTTAQSAWGIGLATVTADDQVLDTWYPTGKLGLGELPLVPGEDEADVLDLPPGAVGDRALPGLRTVQLVTVLSSLADPIKDAADAYLRLHLLSHRLVRPNELNLDGIFGKLANVAWTSAGPCPPERVDELRVIERAAGRHLTIYGVDKFPRMTDYVVPSGVRIADADRVRIGAHLASGTTVMHEGFVNFNAGTLGASMVEGRIVQGVVIGDGSDIGGGASIMGTLSGGGTEKVRVGERSLIGANAGVGISLGDDCVVEAGCYITASSKLTLPDGRVVKARELSGVDGLLFWRNSVTGGLEAKPRSGQGIALNAALHAND.

The Mg(2+) site is built by Asp167 and Glu184. The active-site Acyl-anhydride intermediate is Glu200. Succinyl-CoA contacts are provided by residues Arg202, Gly217, Ser220, Ala243, 258–259 (EA), and Lys278.

This sequence belongs to the type 2 tetrahydrodipicolinate N-succinyltransferase family. In terms of assembly, homotrimer.

Its subcellular location is the cytoplasm. The catalysed reaction is (S)-2,3,4,5-tetrahydrodipicolinate + succinyl-CoA + H2O = (S)-2-succinylamino-6-oxoheptanedioate + CoA. The protein operates within amino-acid biosynthesis; L-lysine biosynthesis via DAP pathway; LL-2,6-diaminopimelate from (S)-tetrahydrodipicolinate (succinylase route): step 1/3. Functionally, catalyzes the conversion of the cyclic tetrahydrodipicolinate (THDP) into the acyclic N-succinyl-L-2-amino-6-oxopimelate using succinyl-CoA. The sequence is that of 2,3,4,5-tetrahydropyridine-2,6-dicarboxylate N-succinyltransferase from Salinispora tropica (strain ATCC BAA-916 / DSM 44818 / JCM 13857 / NBRC 105044 / CNB-440).